The primary structure comprises 135 residues: MVLAASVAQEVANVPFAHEVAGLVQPVAEAQNVLGLIPMSHGLILAGILFAIGLCGVMVRRNFLFMLMSLEIMMNAAALAFVVAGSRWVDPDGQIMFIFILTLAAAEAAIGLAILLRFYHQRGHLDVDSANEMKG.

3 helical membrane-spanning segments follow: residues 33-53 (VLGLIPMSHGLILAGILFAIG), 63-83 (FLFMLMSLEIMMNAAALAFVV), and 95-115 (IMFIFILTLAAAEAAIGLAIL).

This sequence belongs to the complex I subunit 4L family. In terms of assembly, NDH-1 is composed of 14 different subunits. Subunits NuoA, H, J, K, L, M, N constitute the membrane sector of the complex.

Its subcellular location is the cell inner membrane. The catalysed reaction is a quinone + NADH + 5 H(+)(in) = a quinol + NAD(+) + 4 H(+)(out). Its function is as follows. NDH-1 shuttles electrons from NADH, via FMN and iron-sulfur (Fe-S) centers, to quinones in the respiratory chain. The immediate electron acceptor for the enzyme in this species is believed to be ubiquinone. Couples the redox reaction to proton translocation (for every two electrons transferred, four hydrogen ions are translocated across the cytoplasmic membrane), and thus conserves the redox energy in a proton gradient. In Psychrobacter arcticus (strain DSM 17307 / VKM B-2377 / 273-4), this protein is NADH-quinone oxidoreductase subunit K.